The chain runs to 151 residues: Protein SprT-like (151 aa).

Residues 6–148 (LQALVERISL…FCRGKLKKIK (143 aa)) enclose the SprT-like domain. A Zn(2+)-binding site is contributed by H67. E68 is a catalytic residue. Position 71 (H71) interacts with Zn(2+).

Belongs to the SprT family. The cofactor is Zn(2+).

It localises to the cytoplasm. In Anoxybacillus flavithermus (strain DSM 21510 / WK1), this protein is Protein SprT-like.